A 325-amino-acid chain; its full sequence is NADH-quinone oxidoreductase subunit H (325 aa).

8 helical membrane-spanning segments follow: residues 11–31 (ILLSILKAVVILLVVVTCGAF), 81–101 (VIFTLAPVIAFTSLLLAFAIV), 114–134 (IGILFFLMMAGLAVYAVLFAG), 154–174 (LSYEVFLGLSLMGVVAQAGSF), 186–206 (LWNVIPQFFGFVTFAIAGVAV), 237–257 (FFVGEYIGIVTVSALIVTLFF), 265–285 (LPPFIWFALKTAFFMMMFILI), and 304–324 (VCLPLTLVNLLVTAAVILWQA).

The protein belongs to the complex I subunit 1 family. NDH-1 is composed of 13 different subunits. Subunits NuoA, H, J, K, L, M, N constitute the membrane sector of the complex.

The protein resides in the cell inner membrane. It catalyses the reaction a quinone + NADH + 5 H(+)(in) = a quinol + NAD(+) + 4 H(+)(out). NDH-1 shuttles electrons from NADH, via FMN and iron-sulfur (Fe-S) centers, to quinones in the respiratory chain. The immediate electron acceptor for the enzyme in this species is believed to be ubiquinone. Couples the redox reaction to proton translocation (for every two electrons transferred, four hydrogen ions are translocated across the cytoplasmic membrane), and thus conserves the redox energy in a proton gradient. This subunit may bind ubiquinone. This Klebsiella pneumoniae (strain 342) protein is NADH-quinone oxidoreductase subunit H.